A 152-amino-acid polypeptide reads, in one-letter code: Protein SprT-like (152 aa).

The region spanning 7 to 147 (QRLVEEVSLQ…CGKCKGKLKP (141 aa)) is the SprT-like domain. Histidine 67 is a Zn(2+) binding site. Glutamate 68 is a catalytic residue. Histidine 71 lines the Zn(2+) pocket.

This sequence belongs to the SprT family. It depends on Zn(2+) as a cofactor.

It localises to the cytoplasm. The protein is Protein SprT-like of Bacillus cereus (strain ATCC 14579 / DSM 31 / CCUG 7414 / JCM 2152 / NBRC 15305 / NCIMB 9373 / NCTC 2599 / NRRL B-3711).